Reading from the N-terminus, the 297-residue chain is 4-hydroxy-tetrahydrodipicolinate synthase (297 aa).

Threonine 47 is a pyruvate binding site. Residue tyrosine 135 is the Proton donor/acceptor of the active site. The active-site Schiff-base intermediate with substrate is lysine 163. Isoleucine 205 contacts pyruvate.

This sequence belongs to the DapA family. In terms of assembly, homotetramer; dimer of dimers.

It localises to the cytoplasm. It carries out the reaction L-aspartate 4-semialdehyde + pyruvate = (2S,4S)-4-hydroxy-2,3,4,5-tetrahydrodipicolinate + H2O + H(+). It functions in the pathway amino-acid biosynthesis; L-lysine biosynthesis via DAP pathway; (S)-tetrahydrodipicolinate from L-aspartate: step 3/4. Its function is as follows. Catalyzes the condensation of (S)-aspartate-beta-semialdehyde [(S)-ASA] and pyruvate to 4-hydroxy-tetrahydrodipicolinate (HTPA). This is 4-hydroxy-tetrahydrodipicolinate synthase from Dehalococcoides mccartyi (strain ATCC BAA-2266 / KCTC 15142 / 195) (Dehalococcoides ethenogenes (strain 195)).